Reading from the N-terminus, the 346-residue chain is D-fructose 1,6-bisphosphatase class 2/sedoheptulose 1,7-bisphosphatase (346 aa).

Mn(2+) is bound by residues D33, E57, D97, and E100. Substrate-binding positions include 100–102, Y131, 176–178, and 198–200; these read EGT, RDR, and DGD. E225 serves as a coordination point for Mn(2+).

This sequence belongs to the FBPase class 2 family. In terms of assembly, homotetramer. Requires Mn(2+) as cofactor.

The catalysed reaction is beta-D-fructose 1,6-bisphosphate + H2O = beta-D-fructose 6-phosphate + phosphate. It catalyses the reaction D-sedoheptulose 1,7-bisphosphate + H2O = D-sedoheptulose 7-phosphate + phosphate. It participates in carbohydrate biosynthesis; Calvin cycle. Its function is as follows. Catalyzes the hydrolysis of fructose 1,6-bisphosphate (Fru 1,6-P2) and sedoheptulose 1,7-bisphosphate (Sed 1,7-P2) to fructose 6-phosphate and sedoheptulose 7-phosphate, respectively. This is D-fructose 1,6-bisphosphatase class 2/sedoheptulose 1,7-bisphosphatase from Gloeobacter violaceus (strain ATCC 29082 / PCC 7421).